A 340-amino-acid polypeptide reads, in one-letter code: GPALPP motifs-containing protein 1 (340 aa).

The tract at residues 1-304 is disordered; sequence MARDLIGPAL…PQERIPFDRD (304 aa). Ala-2 bears the N-acetylalanine mark. The GPALPP motif 1 motif lies at 7 to 12; that stretch reads GPALPP. The residue at position 28 (Ser-28) is a Phosphoserine. Positions 32–37 match the GPALPP motif 2 motif; that stretch reads GPALPP. Over residues 60–69 the composition is skewed to acidic residues; sequence GNQESEEDDS. The GPALPP motif 3 signature appears at 92–97; sequence GPALPP. Ser-105 is subject to Phosphoserine. Positions 107–116 are enriched in pro residues; that stretch reads PRPIIGPALP. The GPALPP motif 4 motif lies at 112–117; the sequence is GPALPP. The span at 124–133 shows a compositional bias: basic and acidic residues; it reads QKSDKGRDDP. The residue at position 138 (Thr-138) is a Phosphothreonine. 2 positions are modified to phosphoserine: Ser-140 and Ser-141. Basic and acidic residues-rich tracts occupy residues 163-187, 227-261, 269-279, and 287-304; these read EFEKRAQRMKEKLTKGDDDSSKPIV, PADRERKAKETQEARKSSSKKDEEHILSGRDKRLA, ESKRSESLMDI, and KAAEDKNKPQERIPFDRD. A Glycyl lysine isopeptide (Lys-Gly) (interchain with G-Cter in SUMO2) cross-link involves residue Lys-271. Lys-308 participates in a covalent cross-link: Glycyl lysine isopeptide (Lys-Gly) (interchain with G-Cter in SUMO2).

This Homo sapiens (Human) protein is GPALPP motifs-containing protein 1 (GPALPP1).